We begin with the raw amino-acid sequence, 398 residues long: Acetate kinase (398 aa).

Asn-10 contacts Mg(2+). ATP is bound at residue Lys-17. Arg-91 lines the substrate pocket. The active-site Proton donor/acceptor is Asp-148. ATP contacts are provided by residues 208–212 (HLGNG), 283–285 (DCR), and 331–335 (GIGEN). Glu-385 is a Mg(2+) binding site.

Belongs to the acetokinase family. Homodimer. Mg(2+) is required as a cofactor. Requires Mn(2+) as cofactor.

Its subcellular location is the cytoplasm. The enzyme catalyses acetate + ATP = acetyl phosphate + ADP. The protein operates within metabolic intermediate biosynthesis; acetyl-CoA biosynthesis; acetyl-CoA from acetate: step 1/2. Its function is as follows. Catalyzes the formation of acetyl phosphate from acetate and ATP. Can also catalyze the reverse reaction. The polypeptide is Acetate kinase (Shewanella pealeana (strain ATCC 700345 / ANG-SQ1)).